The sequence spans 127 residues: Glycine cleavage system H protein (127 aa).

Residues 24-105 (TAVVGITDFA…YNEGWIVKMK (82 aa)) form the Lipoyl-binding domain. Position 65 is an N6-lipoyllysine (K65).

The protein belongs to the GcvH family. In terms of assembly, the glycine cleavage system is composed of four proteins: P, T, L and H. Requires (R)-lipoate as cofactor.

The glycine cleavage system catalyzes the degradation of glycine. The H protein shuttles the methylamine group of glycine from the P protein to the T protein. This is Glycine cleavage system H protein from Chlorobaculum parvum (strain DSM 263 / NCIMB 8327) (Chlorobium vibrioforme subsp. thiosulfatophilum).